A 250-amino-acid chain; its full sequence is Uracil-DNA glycosylase (250 aa).

Catalysis depends on Asp-91, which acts as the Proton acceptor.

The protein belongs to the uracil-DNA glycosylase (UDG) superfamily. UNG family.

The protein localises to the host nucleus. The enzyme catalyses Hydrolyzes single-stranded DNA or mismatched double-stranded DNA and polynucleotides, releasing free uracil.. Functionally, excises uracil residues from the DNA which can arise as a result of misincorporation of dUMP residues by DNA polymerase or due to deamination of cytosine. In terms of biological role, excises uracil residues from the DNA which can arise as a result of misincorporation of dUMP residues by DNA polymerase or deamination of cytosines. Therefore may reduce deleterious uracil incorporation into the viral genome, particularly in terminally differentiated cells which lack DNA repair enzymes. In Homo sapiens (Human), this protein is Uracil-DNA glycosylase (UL114).